Consider the following 356-residue polypeptide: Outer spore wall protein LDS2 (356 aa).

The Cytoplasmic segment spans residues 1-92; it reads MSTRPQPDWY…ISESVGNSDY (92 aa). The chain crosses the membrane as a helical span at residues 93–113; it reads LHLFFLIFGYYLLNLLLIVAF. Residues 114 to 115 are Extracellular-facing; it reads TS. The helical transmembrane segment at 116 to 136 threads the bilayer; that stretch reads ILAWSLLVCIYLPFLGLFALP. Over 137 to 213 the chain is Cytoplasmic; sequence LAYMQTILIS…KRFYLVSLPQ (77 aa). A helical membrane pass occupies residues 214 to 234; that stretch reads FFIFFFWYIFIAFMFLLLLLV. Over 235–294 the chain is Extracellular; the sequence is PIVGPITINMLPFSPGMGFYYFEPYFVDVLHLDSRKLSKVYYKGFAKWLLYSISSGLLES. A helical transmembrane segment spans residues 295-315; that stretch reads IPILGGLFIGTNAVGASLWIV. At 316–356 the chain is on the cytoplasmic side; that stretch reads KEIKDRDQPAVPPSPPAEPEEPTVGSYAPPIQQSIAHINPP. Residues 322 to 356 form a disordered region; it reads DQPAVPPSPPAEPEEPTVGSYAPPIQQSIAHINPP. Positions 346–356 are enriched in polar residues; it reads IQQSIAHINPP.

The protein belongs to the LDS family.

It is found in the prospore membrane. Its subcellular location is the lipid droplet. It localises to the spore wall. Functionally, involved in spore wall assembly. The protein is Outer spore wall protein LDS2 of Saccharomyces cerevisiae (strain ATCC 204508 / S288c) (Baker's yeast).